The following is a 318-amino-acid chain: 2-keto-3-deoxygluconate permease (318 aa).

The next 10 helical transmembrane spans lie at 10 to 30, 42 to 62, 76 to 96, 105 to 125, 139 to 159, 163 to 183, 199 to 219, 224 to 244, 263 to 283, and 289 to 309; these read IPGG…TFTP, GLIT…GASI, VLVV…GTFL, MLAG…NGGL, AGAF…VILG, IATF…IGFA, VQTL…LSVI, FAGI…LILA, AGAA…FAPV, and ALVA…TALW.

It belongs to the KdgT transporter family.

The protein resides in the cell inner membrane. The enzyme catalyses 2-dehydro-3-deoxy-D-gluconate(in) + H(+)(in) = 2-dehydro-3-deoxy-D-gluconate(out) + H(+)(out). Functionally, catalyzes the proton-dependent uptake of 2-keto-3-deoxygluconate (KDG) into the cell. In Pectobacterium carotovorum subsp. carotovorum (Erwinia carotovora subsp. carotovora), this protein is 2-keto-3-deoxygluconate permease.